We begin with the raw amino-acid sequence, 74 residues long: UPF0346 protein BPUM_1890 (74 aa).

It belongs to the UPF0346 family.

The protein is UPF0346 protein BPUM_1890 of Bacillus pumilus (strain SAFR-032).